A 928-amino-acid chain; its full sequence is Mating-type protein A-alpha Y4 (928 aa).

Positions 152–211 (GKRSRPKFHSEYTPVLELYFHFNAYPTYADRRILAEKTGMLTRQITVWFQNHRRRAKGPL) form a DNA-binding region, homeobox. Disordered stretches follow at residues 255–296 (KSLA…EAGP), 310–329 (DSVS…SQQN), 340–359 (TATK…AGQP), 406–451 (YAYV…HRVS), and 626–736 (ARRK…EQDL). Over residues 344 to 353 (EKRRKMKKLP) the composition is skewed to basic residues. Over residues 635-657 (KALEEKQAKKDRKERQKASRSQR) the composition is skewed to basic and acidic residues. Composition is skewed to low complexity over residues 668–682 (SRAS…LPAR) and 694–728 (ESAA…SMPG).

It is found in the nucleus. In terms of biological role, specifies A-alpha-4 mating-type. May regulate the expression of genes specific to the homokaryotic cell type. This chain is Mating-type protein A-alpha Y4, found in Schizophyllum commune (Split gill fungus).